The primary structure comprises 388 residues: MGSSEAETPAKANKASAPQEQQPPATSSTATPTVYPDWTSFQGYPPIPPHGFFPSPVVSNPQGHPYMWGPQPMMPPYGSPPYVIYPPGGIYAHPSMRPGAHPFAPYTMTSPNGNPDAAGTTTTAATAGGETNGKSSEGKEKSPIKRSKGSLGSLNMITGKNCVEHGKTSGASANGTISQSGESGSESSSEGSEANSQNDSQHKESGQEQDGDVRSSQNGVSPSPSQAQLKQTLAIMQMPSSGPVPGPTTNLNIGMDYWANTASSSPALHGKVTPTAIPGAVAPTEPWMQDERELKRQKRKQSNRDSARRSRLRKQAECEELAQRAEVLKQENASLKDEVSRIRKEYDELLSKNSSLKDNVGDKQHKTDEAGLDNKLQHSGDDSQKDTN.

4 disordered regions span residues 1-49 (MGSS…PIPP), 103-249 (FAPY…GPTT), 261-316 (TASS…RKQA), and 348-388 (ELLS…KDTN). Composition is skewed to low complexity over residues 23 to 33 (PPATSSTATPT) and 117 to 129 (AAGTTTTAATAGG). The segment covering 169 to 179 (SGASANGTISQ) has biased composition (polar residues). Positions 180-193 (SGESGSESSSEGSE) are enriched in low complexity. Residues 214-231 (RSSQNGVSPSPSQAQLKQ) are compositionally biased toward polar residues. A bZIP domain is found at 293-356 (ELKRQKRKQS…DELLSKNSSL (64 aa)). A basic motif region spans residues 295 to 314 (KRQKRKQSNRDSARRSRLRK). Basic and acidic residues predominate over residues 302–316 (SNRDSARRSRLRKQA). A leucine-zipper region spans residues 321–356 (LAQRAEVLKQENASLKDEVSRIRKEYDELLSKNSSL). Basic and acidic residues-rich tracts occupy residues 359 to 369 (NVGDKQHKTDE) and 375 to 388 (KLQHSGDDSQKDTN).

Belongs to the bZIP family. In terms of tissue distribution, highly expressed in roots and at lower levels in stems and leaves.

It is found in the nucleus. Probable transcription factor that may be involved in responses to fungal pathogen infection and abiotic stresses. In Triticum aestivum (Wheat), this protein is bZIP transcription factor 1-D.